The following is a 202-amino-acid chain: Lipoprotein signal peptidase (202 aa).

The disordered stretch occupies residues 1 to 29; sequence MPDEPTGSADPLTSTEEAGGAGEPNAPAP. 3 helical membrane-spanning segments follow: residues 35–55, 88–108, and 112–132; these read MLLSVAVVVLTLDIVTKVVAV, GYTWVLTLIATGVVVGIFWMG, and VSPWWALGLGMILGGAMGNLV. Active-site residues include aspartate 148 and aspartate 162. The chain crosses the membrane as a helical span at residues 160–180; it reads VADPSVVGGAILLVILSIFGF.

This sequence belongs to the peptidase A8 family.

It is found in the cell membrane. The enzyme catalyses Release of signal peptides from bacterial membrane prolipoproteins. Hydrolyzes -Xaa-Yaa-Zaa-|-(S,diacylglyceryl)Cys-, in which Xaa is hydrophobic (preferably Leu), and Yaa (Ala or Ser) and Zaa (Gly or Ala) have small, neutral side chains.. It participates in protein modification; lipoprotein biosynthesis (signal peptide cleavage). Functionally, this protein specifically catalyzes the removal of signal peptides from prolipoproteins. The polypeptide is Lipoprotein signal peptidase (Mycobacterium bovis (strain ATCC BAA-935 / AF2122/97)).